A 565-amino-acid chain; its full sequence is Periplasmic trehalase (565 aa).

Positions 1–30 (MKSPTPSRPQKMALIPACIFLCFAALSVQA) are cleaved as a signal peptide. Substrate is bound by residues arginine 152, 159-160 (WD), asparagine 196, 205-207 (RSQ), 277-279 (RPE), and glycine 310. Residues aspartate 312 and glutamate 496 each act as proton donor/acceptor in the active site. A substrate-binding site is contributed by glutamate 511. Residues 539–565 (CDNVPATRPLSESTTQPLKQKEAEPTP) are disordered.

This sequence belongs to the glycosyl hydrolase 37 family. As to quaternary structure, monomer.

It localises to the periplasm. The enzyme catalyses alpha,alpha-trehalose + H2O = alpha-D-glucose + beta-D-glucose. Its function is as follows. Provides the cells with the ability to utilize trehalose at high osmolarity by splitting it into glucose molecules that can subsequently be taken up by the phosphotransferase-mediated uptake system. This is Periplasmic trehalase from Escherichia coli (strain SMS-3-5 / SECEC).